We begin with the raw amino-acid sequence, 364 residues long: Aminomethyltransferase (364 aa).

It belongs to the GcvT family. In terms of assembly, the glycine cleavage system is composed of four proteins: P, T, L and H.

It catalyses the reaction N(6)-[(R)-S(8)-aminomethyldihydrolipoyl]-L-lysyl-[protein] + (6S)-5,6,7,8-tetrahydrofolate = N(6)-[(R)-dihydrolipoyl]-L-lysyl-[protein] + (6R)-5,10-methylene-5,6,7,8-tetrahydrofolate + NH4(+). In terms of biological role, the glycine cleavage system catalyzes the degradation of glycine. This chain is Aminomethyltransferase, found in Shewanella sp. (strain ANA-3).